The following is a 611-amino-acid chain: Threonine--tRNA ligase (611 aa).

Residues methionine 1–lysine 27 are disordered. Residues proline 8–valine 24 show a composition bias toward low complexity. Positions aspartate 209–proline 502 are catalytic. Zn(2+) is bound by residues cysteine 302, histidine 353, and histidine 479.

Belongs to the class-II aminoacyl-tRNA synthetase family. In terms of assembly, homodimer. Zn(2+) is required as a cofactor.

The protein localises to the cytoplasm. It catalyses the reaction tRNA(Thr) + L-threonine + ATP = L-threonyl-tRNA(Thr) + AMP + diphosphate + H(+). Functionally, catalyzes the attachment of threonine to tRNA(Thr) in a two-step reaction: L-threonine is first activated by ATP to form Thr-AMP and then transferred to the acceptor end of tRNA(Thr). Also edits incorrectly charged L-seryl-tRNA(Thr). The polypeptide is Threonine--tRNA ligase (Synechococcus sp. (strain CC9605)).